Consider the following 59-residue polypeptide: Antibacterial peptide enbocin (59 aa).

The first 20 residues, 1–20 (MNFTRIIFFLFVVVFATASG), serve as a signal peptide directing secretion. Lysine 21 is a propeptide. Serine amide is present on serine 58.

This sequence belongs to the cecropin family.

The protein resides in the secreted. Its function is as follows. Has antibacterial activity against Gram-positive and Gram-negative bacteria. This is Antibacterial peptide enbocin from Bombyx mori (Silk moth).